The chain runs to 314 residues: Dioxygenase easH (314 aa).

His141, Asp143, and His217 together coordinate Fe cation.

It belongs to the PhyH family. In terms of assembly, homodimer. Fe cation serves as cofactor.

Its pathway is alkaloid biosynthesis; ergot alkaloid biosynthesis. In terms of biological role, dioxygenase; part of the gene cluster that mediates the biosynthesis of fungal ergot alkaloid. DmaW catalyzes the first step of ergot alkaloid biosynthesis by condensing dimethylallyl diphosphate (DMAP) and tryptophan to form 4-dimethylallyl-L-tryptophan. The second step is catalyzed by the methyltransferase easF that methylates 4-dimethylallyl-L-tryptophan in the presence of S-adenosyl-L-methionine, resulting in the formation of 4-dimethylallyl-L-abrine. The catalase easC and the FAD-dependent oxidoreductase easE then transform 4-dimethylallyl-L-abrine to chanoclavine-I which is further oxidized by easD in the presence of NAD(+), resulting in the formation of chanoclavine-I aldehyde. Agroclavine dehydrogenase easG then mediates the conversion of chanoclavine-I aldehyde to agroclavine via a non-enzymatic adduct reaction: the substrate is an iminium intermediate that is formed spontaneously from chanoclavine-I aldehyde in the presence of glutathione. The presence of easA is not required to complete this reaction. Further conversion of agroclavine to paspalic acid is a two-step process involving oxidation of agroclavine to elymoclavine and of elymoclavine to paspalic acid, the second step being performed by the elymoclavine oxidase cloA. Paspalic acid is then further converted to D-lysergic acid. Ergopeptines are assembled from D-lysergic acid and three different amino acids by the D-lysergyl-peptide-synthetases composed each of a monomudular and a trimodular nonribosomal peptide synthetase subunit. LpsB and lpsC encode the monomodular subunits responsible for D-lysergic acid activation and incorporation into the ergopeptine backbone. LpsA1 and A2 subunits encode the trimodular nonribosomal peptide synthetase assembling the tripeptide portion of ergopeptines. LpsA1 is responsible for formation of the major ergopeptine, ergotamine, and lpsA2 for alpha-ergocryptine, the minor ergopeptine of the total alkaloid mixture elaborated by C.purpurea. D-lysergyl-tripeptides are assembled by the nonribosomal peptide synthetases and released as N-(D-lysergyl-aminoacyl)-lactams. Cyclolization of the D-lysergyl-tripeptides is performed by the Fe(2+)/2-ketoglutarate-dependent dioxygenase easH which introduces a hydroxyl group into N-(D-lysergyl-aminoacyl)-lactam at alpha-C of the aminoacyl residue followed by spontaneous condensation with the terminal lactam carbonyl group. The polypeptide is Dioxygenase easH (Claviceps purpurea (strain 20.1) (Ergot fungus)).